The following is a 119-amino-acid chain: Small ribosomal subunit protein eS25 (119 aa).

Residues 1-42 (MPPKKDTKASAKQPQKTQKKKEGSGGGKAKKKKWSKGKVRDK) are disordered. Residues 28–37 (KAKKKKWSKG) are compositionally biased toward basic residues.

It belongs to the eukaryotic ribosomal protein eS25 family.

This chain is Small ribosomal subunit protein eS25 (RpS25), found in Spodoptera frugiperda (Fall armyworm).